The sequence spans 127 residues: Interacting with cytoskeleton protein 1 (127 aa).

The protein resides in the vacuole membrane. Functionally, required for viability of cells lacking mtDNA. This Saccharomyces cerevisiae (strain ATCC 204508 / S288c) (Baker's yeast) protein is Interacting with cytoskeleton protein 1 (ICY1).